A 490-amino-acid polypeptide reads, in one-letter code: Betaine aldehyde dehydrogenase (490 aa).

Positions 26, 27, and 93 each coordinate K(+). 150 to 152 (GAW) is an NAD(+) binding site. The active-site Charge relay system is Lys-162. Position 176-179 (176-179 (KPSE)) interacts with NAD(+). Position 180 (Val-180) interacts with K(+). Residue 230 to 233 (GVAS) coordinates NAD(+). Leu-246 lines the K(+) pocket. Glu-252 (proton acceptor) is an active-site residue. The NAD(+) site is built by Gly-254, Cys-286, and Glu-387. Cys-286 (nucleophile) is an active-site residue. Position 286 is a cysteine sulfenic acid (-SOH) (Cys-286). K(+)-binding residues include Lys-457 and Gly-460. The active-site Charge relay system is the Glu-464.

This sequence belongs to the aldehyde dehydrogenase family. As to quaternary structure, dimer of dimers. Requires K(+) as cofactor.

The catalysed reaction is betaine aldehyde + NAD(+) + H2O = glycine betaine + NADH + 2 H(+). Its pathway is amine and polyamine biosynthesis; betaine biosynthesis via choline pathway; betaine from betaine aldehyde: step 1/1. Involved in the biosynthesis of the osmoprotectant glycine betaine. Catalyzes the irreversible oxidation of betaine aldehyde to the corresponding acid. In Escherichia coli O7:K1 (strain IAI39 / ExPEC), this protein is Betaine aldehyde dehydrogenase.